The sequence spans 579 residues: Potassium-transporting ATPase potassium-binding subunit (579 aa).

A run of 10 helical transmembrane segments spans residues 2–22 (MNLV…AIPL), 66–86 (SFSV…IHIF), 135–155 (GLTV…FALI), 177–197 (VLYI…SQGV), 262–282 (LSNL…CFTF), 292–312 (GIAI…IIGV), 391–411 (VFGG…LAVF), 437–457 (VLVC…ASIL), 490–510 (FAGF…SMLF), and 546–566 (FIGL…FPAL).

Belongs to the KdpA family. As to quaternary structure, the system is composed of three essential subunits: KdpA, KdpB and KdpC.

The protein localises to the cell membrane. Functionally, part of the high-affinity ATP-driven potassium transport (or Kdp) system, which catalyzes the hydrolysis of ATP coupled with the electrogenic transport of potassium into the cytoplasm. This subunit binds the extracellular potassium ions and delivers the ions to the membrane domain of KdpB through an intramembrane tunnel. The protein is Potassium-transporting ATPase potassium-binding subunit of Clostridium botulinum (strain Alaska E43 / Type E3).